The primary structure comprises 1048 residues: uncharacterized protein (1048 aa).

Positions glutamate 601–threonine 629 are disordered. The span at asparagine 605–glutamine 621 shows a compositional bias: low complexity.

This is an uncharacterized protein from Methanocaldococcus jannaschii (strain ATCC 43067 / DSM 2661 / JAL-1 / JCM 10045 / NBRC 100440) (Methanococcus jannaschii).